Consider the following 204-residue polypeptide: GTP cyclohydrolase 1 (204 aa).

Cys-92, His-95, and Cys-165 together coordinate Zn(2+).

Belongs to the GTP cyclohydrolase I family. Homomer.

The catalysed reaction is GTP + H2O = 7,8-dihydroneopterin 3'-triphosphate + formate + H(+). It functions in the pathway cofactor biosynthesis; 7,8-dihydroneopterin triphosphate biosynthesis; 7,8-dihydroneopterin triphosphate from GTP: step 1/1. The sequence is that of GTP cyclohydrolase 1 from Mycolicibacterium paratuberculosis (strain ATCC BAA-968 / K-10) (Mycobacterium paratuberculosis).